The following is a 126-amino-acid chain: Ribosome-binding factor A (126 aa).

The protein belongs to the RbfA family. Monomer. Binds 30S ribosomal subunits, but not 50S ribosomal subunits or 70S ribosomes.

The protein localises to the cytoplasm. Functionally, one of several proteins that assist in the late maturation steps of the functional core of the 30S ribosomal subunit. Associates with free 30S ribosomal subunits (but not with 30S subunits that are part of 70S ribosomes or polysomes). Required for efficient processing of 16S rRNA. May interact with the 5'-terminal helix region of 16S rRNA. This is Ribosome-binding factor A from Halorhodospira halophila (strain DSM 244 / SL1) (Ectothiorhodospira halophila (strain DSM 244 / SL1)).